Consider the following 140-residue polypeptide: Nucleoside diphosphate kinase (140 aa).

Residues Lys-11, Phe-59, Arg-87, Thr-93, Arg-104, and Asn-114 each coordinate ATP. Catalysis depends on His-117, which acts as the Pros-phosphohistidine intermediate.

The protein belongs to the NDK family. Homotetramer. It depends on Mg(2+) as a cofactor.

The protein resides in the cytoplasm. It carries out the reaction a 2'-deoxyribonucleoside 5'-diphosphate + ATP = a 2'-deoxyribonucleoside 5'-triphosphate + ADP. It catalyses the reaction a ribonucleoside 5'-diphosphate + ATP = a ribonucleoside 5'-triphosphate + ADP. Its function is as follows. Major role in the synthesis of nucleoside triphosphates other than ATP. The ATP gamma phosphate is transferred to the NDP beta phosphate via a ping-pong mechanism, using a phosphorylated active-site intermediate. The polypeptide is Nucleoside diphosphate kinase (Francisella philomiragia subsp. philomiragia (strain ATCC 25017 / CCUG 19701 / FSC 153 / O#319-036)).